We begin with the raw amino-acid sequence, 115 residues long: Putative UPF0320 protein YKL225W (115 aa).

It belongs to the UPF0320 family.

The polypeptide is Putative UPF0320 protein YKL225W (Saccharomyces cerevisiae (strain ATCC 204508 / S288c) (Baker's yeast)).